The sequence spans 234 residues: Putative lipoyltransferase 2, mitochondrial (234 aa).

A mitochondrion-targeting transit peptide spans 1-28; that stretch reads MPFVRPLVTVVRAGRHSYSAGLQLQQRL. The BPL/LPL catalytic domain occupies 39 to 220; that stretch reads AEFRNYLVLQ…SFAKVFECRL (182 aa). Substrate is bound by residues 83–90, 150–152, and 163–165; these read RGGLITFH, AIG, and GIG. The active-site Acyl-thioester intermediate is cysteine 181.

The protein belongs to the LipB family.

It is found in the mitochondrion. It catalyses the reaction octanoyl-[ACP] + L-lysyl-[protein] = N(6)-octanoyl-L-lysyl-[protein] + holo-[ACP] + H(+). The protein operates within protein modification; protein lipoylation via endogenous pathway; protein N(6)-(lipoyl)lysine from octanoyl-[acyl-carrier-protein]: step 1/2. Its function is as follows. Catalyzes the transfer of endogenously produced octanoic acid from octanoyl-acyl-carrier-protein onto the lipoyl domains of lipoate-dependent enzymes. Lipoyl-ACP can also act as a substrate although octanoyl-ACP is likely to be the physiological substrate. The sequence is that of Putative lipoyltransferase 2, mitochondrial from Drosophila melanogaster (Fruit fly).